The following is a 349-amino-acid chain: Phosphoribosylformylglycinamidine cyclo-ligase (349 aa).

Belongs to the AIR synthase family.

It is found in the cytoplasm. The catalysed reaction is 2-formamido-N(1)-(5-O-phospho-beta-D-ribosyl)acetamidine + ATP = 5-amino-1-(5-phospho-beta-D-ribosyl)imidazole + ADP + phosphate + H(+). It participates in purine metabolism; IMP biosynthesis via de novo pathway; 5-amino-1-(5-phospho-D-ribosyl)imidazole from N(2)-formyl-N(1)-(5-phospho-D-ribosyl)glycinamide: step 2/2. The polypeptide is Phosphoribosylformylglycinamidine cyclo-ligase (Methanococcus maripaludis (strain C7 / ATCC BAA-1331)).